The following is a 598-amino-acid chain: Elongation factor 4 (598 aa).

Residues 5-187 (SHIRNFSIIA…RLVATIPAPT (183 aa)) enclose the tr-type G domain. Residues 17-22 (DHGKST) and 134-137 (NKMD) contribute to the GTP site.

Belongs to the TRAFAC class translation factor GTPase superfamily. Classic translation factor GTPase family. LepA subfamily.

The protein localises to the cell inner membrane. It carries out the reaction GTP + H2O = GDP + phosphate + H(+). Required for accurate and efficient protein synthesis under certain stress conditions. May act as a fidelity factor of the translation reaction, by catalyzing a one-codon backward translocation of tRNAs on improperly translocated ribosomes. Back-translocation proceeds from a post-translocation (POST) complex to a pre-translocation (PRE) complex, thus giving elongation factor G a second chance to translocate the tRNAs correctly. Binds to ribosomes in a GTP-dependent manner. The sequence is that of Elongation factor 4 from Pseudomonas syringae pv. syringae (strain B728a).